The following is a 316-amino-acid chain: MTQAPPSPQAEGRKLLRLEARNSETPIERKPEWIKTRAKMGPEYQHLQNLVKSEGLHTVCQEAGCPNIYECWEDREATFLIGGEQCTRRCDFCQIDTGRPKPLDRDEPRRVAESVRTMGLRYATITGVTRDDLIDEGAWLYAETVRQIHELNPGIGVENLIPDFSGKPDLLAQVFESRPEVLAHNLETVPRIFKRIRPAFRYDRSLDVLTQARDFGLVTKSNLILGLGETREEVSQALRDLHAAGCELLTITQYLRPSPRHHPVERWVKPEEFVELKDEADEVGFTGVMSGPLVRSSYRAGRLYRQAVEAREGVTA.

7 residues coordinate [4Fe-4S] cluster: Cys60, Cys65, Cys71, Cys86, Cys90, Cys93, and Ser297. The Radical SAM core domain maps to 72 to 286; that stretch reads WEDREATFLI…KDEADEVGFT (215 aa).

It belongs to the radical SAM superfamily. Lipoyl synthase family. Requires [4Fe-4S] cluster as cofactor.

It localises to the cytoplasm. It carries out the reaction [[Fe-S] cluster scaffold protein carrying a second [4Fe-4S](2+) cluster] + N(6)-octanoyl-L-lysyl-[protein] + 2 oxidized [2Fe-2S]-[ferredoxin] + 2 S-adenosyl-L-methionine + 4 H(+) = [[Fe-S] cluster scaffold protein] + N(6)-[(R)-dihydrolipoyl]-L-lysyl-[protein] + 4 Fe(3+) + 2 hydrogen sulfide + 2 5'-deoxyadenosine + 2 L-methionine + 2 reduced [2Fe-2S]-[ferredoxin]. Its pathway is protein modification; protein lipoylation via endogenous pathway; protein N(6)-(lipoyl)lysine from octanoyl-[acyl-carrier-protein]: step 2/2. Its function is as follows. Catalyzes the radical-mediated insertion of two sulfur atoms into the C-6 and C-8 positions of the octanoyl moiety bound to the lipoyl domains of lipoate-dependent enzymes, thereby converting the octanoylated domains into lipoylated derivatives. The chain is Lipoyl synthase from Nocardioides sp. (strain ATCC BAA-499 / JS614).